We begin with the raw amino-acid sequence, 187 residues long: UPF0301 protein YqgE (187 aa).

It belongs to the UPF0301 (AlgH) family.

The chain is UPF0301 protein YqgE from Escherichia fergusonii (strain ATCC 35469 / DSM 13698 / CCUG 18766 / IAM 14443 / JCM 21226 / LMG 7866 / NBRC 102419 / NCTC 12128 / CDC 0568-73).